A 209-amino-acid chain; its full sequence is Thymidylate kinase (209 aa).

10–17 (GPDGAGKT) contacts ATP.

The protein belongs to the thymidylate kinase family.

The enzyme catalyses dTMP + ATP = dTDP + ADP. Phosphorylation of dTMP to form dTDP in both de novo and salvage pathways of dTTP synthesis. This is Thymidylate kinase from Pediococcus pentosaceus (strain ATCC 25745 / CCUG 21536 / LMG 10740 / 183-1w).